We begin with the raw amino-acid sequence, 116 residues long: Iron-sulfur cluster insertion protein ErpA (116 aa).

Positions 44, 108, and 110 each coordinate iron-sulfur cluster.

This sequence belongs to the HesB/IscA family. Homodimer. Iron-sulfur cluster is required as a cofactor.

Its function is as follows. Required for insertion of 4Fe-4S clusters for at least IspG. In Stutzerimonas stutzeri (strain A1501) (Pseudomonas stutzeri), this protein is Iron-sulfur cluster insertion protein ErpA.